The sequence spans 503 residues: Aspartyl/glutamyl-tRNA(Asn/Gln) amidotransferase subunit B (503 aa).

It belongs to the GatB/GatE family. GatB subfamily. In terms of assembly, heterotrimer of A, B and C subunits.

It catalyses the reaction L-glutamyl-tRNA(Gln) + L-glutamine + ATP + H2O = L-glutaminyl-tRNA(Gln) + L-glutamate + ADP + phosphate + H(+). The enzyme catalyses L-aspartyl-tRNA(Asn) + L-glutamine + ATP + H2O = L-asparaginyl-tRNA(Asn) + L-glutamate + ADP + phosphate + 2 H(+). Allows the formation of correctly charged Asn-tRNA(Asn) or Gln-tRNA(Gln) through the transamidation of misacylated Asp-tRNA(Asn) or Glu-tRNA(Gln) in organisms which lack either or both of asparaginyl-tRNA or glutaminyl-tRNA synthetases. The reaction takes place in the presence of glutamine and ATP through an activated phospho-Asp-tRNA(Asn) or phospho-Glu-tRNA(Gln). The sequence is that of Aspartyl/glutamyl-tRNA(Asn/Gln) amidotransferase subunit B from Roseobacter denitrificans (strain ATCC 33942 / OCh 114) (Erythrobacter sp. (strain OCh 114)).